Consider the following 1369-residue polypeptide: ATP-dependent RNA helicase DHX29 (1369 aa).

Disordered stretches follow at residues 27–75 (SAEA…TNDS) and 176–226 (SQEF…KNME). 3 positions are modified to phosphoserine: Ser-71, Ser-192, and Ser-200. A compositionally biased stretch (polar residues) spans 189 to 201 (KFQSPQIQATISP). The span at 208–226 (KTYEEDPKSKPKKEEKNME) shows a compositional bias: basic and acidic residues. 3 coiled-coil regions span residues 222–256 (EKNM…EEEE), 283–310 (LEKN…LEDH), and 492–519 (IAKL…NSED). The segment at 502–526 (QQQQQQQHSENKRENSEDPEESWEN) is disordered. The Helicase ATP-binding domain occupies 582–755 (VETLKRHRVV…FTHCPILRIS (174 aa)). 595–602 (GETGSGKS) is an ATP binding site. The DEAH box motif lies at 702-705 (DEVH). The 178-residue stretch at 849–1026 (LILELLAYLD…ELCLHIMKCN (178 aa)) folds into the Helicase C-terminal domain.

The protein belongs to the DEAD box helicase family. DEAH subfamily. Part of the 43S pre-initiation complex (PIC) that contains at least Met-tRNA, EIF1, EIF1A (EIF1AX or EIF1AY), EIF2S1, EIF2S2, EIF2S3, EIF3A, EIF3B, EIF3C, EIF3D, EIF3E, EIF3F, EIF3G, EIF3H, EIF3I, EIF3J, EIF3K, EIF3L, EIF3M, DHX29 and the 40S ribosomal subunit.

The protein resides in the cytoplasm. The catalysed reaction is ATP + H2O = ADP + phosphate + H(+). In terms of biological role, ATP-binding RNA helicase involved in translation initiation. Part of the 43S pre-initiation complex that is required for efficient initiation on mRNAs of higher eukaryotes with structured 5'-UTRs by promoting efficient NTPase-dependent 48S complex formation. Specifically binds to the 40S ribosome near the mRNA entrance. Does not possess a processive helicase activity. In Homo sapiens (Human), this protein is ATP-dependent RNA helicase DHX29.